Reading from the N-terminus, the 262-residue chain is 5'-nucleotidase SurE (262 aa).

A divalent metal cation-binding residues include D8, D9, S40, and N92.

The protein belongs to the SurE nucleotidase family. A divalent metal cation serves as cofactor.

It localises to the cytoplasm. The enzyme catalyses a ribonucleoside 5'-phosphate + H2O = a ribonucleoside + phosphate. Functionally, nucleotidase that shows phosphatase activity on nucleoside 5'-monophosphates. This is 5'-nucleotidase SurE from Xylella fastidiosa (strain 9a5c).